Reading from the N-terminus, the 733-residue chain is MAEAETHPPIGESQTEPAESGCPMRIKPPVEGGSNRDWWPNAVNLKILQKNPPAIDPSDEGYDSEAVKSLDVEAFQRDFDELLTNSQDWWPADFGHYGPLFVRMSWHAAGTYRVEDGRGGGGRGMQPFAPLNSWPDNVSLDKARRLLWPLKKKYGKQISWSDLIVYSGNRAMEHMGFKTAGFAFGRPDYWEPEEDIYWGAEAEWLGSQDRYAGANGDRTKLENPPXXPHMGLIYVNPEGPEGNPDYLAAAIDIRETFGRMAMNDIETAALIVGGHTFGKTHGATDIENGVEPEXXPLEQMGLGWANPGLGNDTVSSGLEVTWTQHPTKWDNSFLEILYSNEWELTKSPAGANQWKPKDNGWANSWPMAQGTGKTHPSMLTTDLSMRFDPIYGEITRRWLDHPEELAEEYAKAWFKLIHRDMGPVTRYLGPLVPKQTWLWQDIIPAGKQLSDADVATLKAAIADSGLSIQQLVNTAWKAAASYRSSDMRGGNGGRIRLQPQLGWEVNEPEELAPVIAKLEEIQAASDSGVSFADLVVLGGVVGLEKAIKAAGFDVAVPFTSGPRDALQEQTDVDSFAYLEPKGDGFRNFVAKGDSVPAEYRLIDRANLLGLSAPQMTVLIGGLRVLGANHGGSELGVLTDKVGQLTNDYFVNLTDMGTKWAPAPADDGTYVGTDRATGSPKWTASRVDLLFGSNSQLRALAEVYAEDDSKEKFVKDFVAAWTKVMNADRFDLEA.

A disordered region spans residues 1 to 35; the sequence is MAEAETHPPIGESQTEPAESGCPMRIKPPVEGGSN. A cross-link (tryptophyl-tyrosyl-methioninium (Trp-Tyr) (with M-260)) is located at residues 106–234; the sequence is WHAAGTYRVE…PXXPHMGLIY (129 aa). The active-site Proton acceptor is the histidine 107. The tryptophyl-tyrosyl-methioninium (Tyr-Met) (with W-106) cross-link spans 234-260; that stretch reads YVNPEGPEGNPDYLAAAIDIRETFGRM. Residue histidine 275 participates in heme binding.

Belongs to the peroxidase family. Peroxidase/catalase subfamily. In terms of assembly, homodimer or homotetramer. Heme b is required as a cofactor. Formation of the three residue Trp-Tyr-Met cross-link is important for the catalase, but not the peroxidase activity of the enzyme.

It carries out the reaction H2O2 + AH2 = A + 2 H2O. The catalysed reaction is 2 H2O2 = O2 + 2 H2O. Bifunctional enzyme with both catalase and broad-spectrum peroxidase activity. May play a role in the intracellular survival of mycobacteria. This is Catalase-peroxidase 2 from Mycolicibacterium fortuitum (Mycobacterium fortuitum).